The following is a 129-amino-acid chain: MADFQVVVGDDDGTAYSFEVDGQDANRFIGRAIGETVDGDAVGLPGYELEITGGSDQSGRPMHGDINGAETAAILSEGGVGFNPTVDGERKRVTVRGAEVSEDTRQINASIVSRGEQSIDDLLGGEDDE.

Residues 106–129 form a disordered region; sequence QINASIVSRGEQSIDDLLGGEDDE.

It belongs to the eukaryotic ribosomal protein eS6 family.

The protein is Small ribosomal subunit protein eS6 of Natronomonas pharaonis (strain ATCC 35678 / DSM 2160 / CIP 103997 / JCM 8858 / NBRC 14720 / NCIMB 2260 / Gabara) (Halobacterium pharaonis).